Consider the following 188-residue polypeptide: Ribosome hibernation promotion factor (188 aa).

The segment at 93-125 (KTRVNRKKRKESEHEPFPATPETPPETAVDHDK) is disordered.

This sequence belongs to the HPF/YfiA ribosome-associated protein family. Long HPF subfamily. As to quaternary structure, interacts with 100S ribosomes.

The protein resides in the cytoplasm. Its function is as follows. Required for dimerization of active 70S ribosomes into 100S ribosomes in stationary phase; 100S ribosomes are translationally inactive and sometimes present during exponential growth. The polypeptide is Ribosome hibernation promotion factor (Staphylococcus carnosus (strain TM300)).